Reading from the N-terminus, the 258-residue chain is MWFLVLCLALSLGGTGAAPPIQSRIVGGWECSQPWQAALYHFSTFQCGGILVHPQWVLTAAHCIGDNYQLWLGRHNLFDDEDTAQFVHVSESFPHPCFNMSLLKNHTRQADEDYSHDLMLLRLTQPAEITDAVQVVELPTQEPEVGSTCLASGWGSIEPENFSYPDDLQCVDLKILPNDKCAKAHTQKVTEFMLCAGHLEGGKDTCVGDSGGPLTCDGVLQGVTSWGYIPCGSPNKPAVFVRVLSYVKWIEDTIAENS.

The signal sequence occupies residues 1-18 (MWFLVLCLALSLGGTGAA). A propeptide spans 19 to 24 (PPIQSR) (activation peptide). In terms of domain architecture, Peptidase S1 spans 25 to 255 (IVGGWECSQP…YVKWIEDTIA (231 aa)). Disulfide bonds link cysteine 31–cysteine 170, cysteine 47–cysteine 63, cysteine 149–cysteine 216, cysteine 181–cysteine 195, and cysteine 206–cysteine 231. The active-site Charge relay system is histidine 62. An O-linked (GalNAc...) serine glycan is attached at serine 90. Residue asparagine 99 is glycosylated (N-linked (GlcNAc...) asparagine). Serine 101 carries O-linked (GalNAc...) serine glycosylation. The N-linked (GlcNAc...) asparagine glycan is linked to asparagine 105. Residue aspartate 117 is the Charge relay system of the active site. Asparagine 161 carries an N-linked (GlcNAc...) asparagine glycan. Residue serine 163 is glycosylated (O-linked (GalNAc...) serine). Serine 210 serves as the catalytic Charge relay system.

This sequence belongs to the peptidase S1 family. Kallikrein subfamily.

The enzyme catalyses Preferential cleavage of Arg-|-Xaa bonds in small molecule substrates. Highly selective action to release kallidin (lysyl-bradykinin) from kininogen involves hydrolysis of Met-|-Xaa or Leu-|-Xaa.. Functionally, glandular kallikreins cleave Met-Lys and Arg-Ser bonds in kininogen to release Lys-bradykinin. This is Kallikrein-1 (KLK1) from Papio hamadryas (Hamadryas baboon).